Here is a 96-residue protein sequence, read N- to C-terminus: uncharacterized protein (96 aa).

A signal peptide spans 1-28 (MNKKAIVGIFMSILMAGLVGCAGSSDAQ).

This is an uncharacterized protein from Butyrivibrio fibrisolvens.